Here is a 146-residue protein sequence, read N- to C-terminus: Large ribosomal subunit protein eL28 (146 aa).

Positions 123–146 (VRAARKERSSKITFQRKAVRPKRH) are disordered.

It belongs to the eukaryotic ribosomal protein eL28 family.

The sequence is that of Large ribosomal subunit protein eL28 from Trypanosoma cruzi.